The following is a 558-amino-acid chain: Formate--tetrahydrofolate ligase (558 aa).

ATP is bound at residue 65–72; sequence TPAGEGKT.

The protein belongs to the formate--tetrahydrofolate ligase family.

It carries out the reaction (6S)-5,6,7,8-tetrahydrofolate + formate + ATP = (6R)-10-formyltetrahydrofolate + ADP + phosphate. Its pathway is one-carbon metabolism; tetrahydrofolate interconversion. In Methylobacterium nodulans (strain LMG 21967 / CNCM I-2342 / ORS 2060), this protein is Formate--tetrahydrofolate ligase.